The sequence spans 77 residues: Acyl carrier protein (77 aa).

Positions 2–77 constitute a Carrier domain; sequence SDIADRVKKI…DAVKFIQGAV (76 aa). O-(pantetheine 4'-phosphoryl)serine is present on Ser37.

The protein belongs to the acyl carrier protein (ACP) family. In terms of processing, 4'-phosphopantetheine is transferred from CoA to a specific serine of apo-ACP by AcpS. This modification is essential for activity because fatty acids are bound in thioester linkage to the sulfhydryl of the prosthetic group.

It localises to the cytoplasm. Its pathway is lipid metabolism; fatty acid biosynthesis. Carrier of the growing fatty acid chain in fatty acid biosynthesis. This is Acyl carrier protein from Paracoccus denitrificans (strain Pd 1222).